The following is an 872-amino-acid chain: MKILKTLTLRGPNYWSIRRKKLIVMRLDLEDLADKPSNEIPGFYDGLVEVLPSLVEHYCSPGHRGGFLERVKEGTYMGHIVEHVALELQELTKMPVGFGRTRETATPGIYNVVFEYVDEQAGRYAGRAAVRLCRSIVDTGTYPLKELEQDLSDLQDLQANASLGPSTQTLVTEAEARNIPWMALSARAMVQLGYGVHQKRIQATLSNYSGILAVELACDKEGTKTILQDAGVPVPRGTTIQFFEELESAIDDVGGYPIVIKPLDGNHGRGITIDINSWKEAEEAYDLASEESKTRTVIVERFYKGSDHRLLVINGKLVAVAERVPAHVIGDDKHTIEELIDITNEDPRRGEGHDNVLTRIKVDKTVLGMLDKQGLRLDSILDKGEIVYLRATANLSTGGSAIDRTDDIHPENLWMAERVAKIIGLDIMGIDVVTPDITKPLRDVDGVIVEVNAAPGFRMHVAPSQGLSRNVAAPVMDMLFPPESPSRVPIVAITGTNGKTTTTRLTAHIYRQTGKVVGYTSTDGVYIGEYLVEKGDNTGPFSAGMILKDPTVEVAVLESARGGILRSGLAFDTCDVGIVLNVAADHLGLGDINTIEQMARVKGVVAEVVHADGYAVLNADDPLVAAMAEQVKGKVAYFSMNPDNEIIHNHTRRDGMAAVYENGYISILEGQFTLRIEEAVNVPMTMGGMAPFMIANALAACLAAFCQGVDIEDIRQGVRTFKASANQTPGRMNLFNLGDYHALVDYAHNPAGYEAVGEFVKNWKGQRLGVVGGPGDRRDEDLILLGKIAARVFDRILVKEDDDKRGRARGEAADLIIDGILSENDKADYEAILDETEAIEYGLDKVDKGGLVVIFPESVTRAISLINRRNPI.

In terms of domain architecture, ATP-grasp spans 224 to 480 (KTILQDAGVP…VAAPVMDMLF (257 aa)). Residue 495-501 (GTNGKTT) coordinates ATP.

In the C-terminal section; belongs to the MurCDEF family. As to quaternary structure, homodimer.

It carries out the reaction [L-4-(L-arginin-2-N-yl)aspartate](n) + L-aspartate + ATP = [L-4-(L-arginin-2-N-yl)aspartate](n)-L-aspartate + ADP + phosphate + H(+). The catalysed reaction is [L-4-(L-arginin-2-N-yl)aspartate](n)-L-aspartate + L-arginine + ATP = [L-4-(L-arginin-2-N-yl)aspartate](n+1) + ADP + phosphate + H(+). Functionally, catalyzes the ATP-dependent polymerization of arginine and aspartate to multi-L-arginyl-poly-L-aspartic acid (cyanophycin; a water-insoluble reserve polymer). The chain is Cyanophycin synthetase (cphA) from Crocosphaera subtropica (strain ATCC 51142 / BH68) (Cyanothece sp. (strain ATCC 51142)).